Consider the following 203-residue polypeptide: Dephospho-CoA kinase (203 aa).

The DPCK domain occupies 6–203 (ILGLTGGIGS…FYLTLRGGRA (198 aa)). 14-19 (GSGKSA) contributes to the ATP binding site.

The protein belongs to the CoaE family.

Its subcellular location is the cytoplasm. It catalyses the reaction 3'-dephospho-CoA + ATP = ADP + CoA + H(+). Its pathway is cofactor biosynthesis; coenzyme A biosynthesis; CoA from (R)-pantothenate: step 5/5. Catalyzes the phosphorylation of the 3'-hydroxyl group of dephosphocoenzyme A to form coenzyme A. The polypeptide is Dephospho-CoA kinase (Pseudomonas aeruginosa (strain ATCC 15692 / DSM 22644 / CIP 104116 / JCM 14847 / LMG 12228 / 1C / PRS 101 / PAO1)).